A 135-amino-acid chain; its full sequence is MNFSMHLVLAVAAAACLCVVTAAPEGRLTRTKQQRPTRGFKNVEMMTARGFGKRDRPHTRAELYGLDNFWEMLEAAPEREGQESTDEKTLESIPLDWFVNEMLNNPDFARSVVRKFIDLNQDGMLSSEELLRNVA.

A signal peptide spans 1 to 22 (MNFSMHLVLAVAAAACLCVVTA). Phe-51 is modified (phenylalanine amide). The propeptide occupies 55 to 135 (DRPHTRAELY…SSEELLRNVA (81 aa)).

As to expression, allatotropin: Expressed in corpora cardiaca (CC), corpora allata (CA), antennal lobe (AL) and gnathal ganglion (GNG) (protein level). Expression in AL detected in all animals, expression in GNG detected in most animals and expression in CA and CC detected in few animals (at protein level). Allatotropin-PP-1: Expressed in corpora cardiaca (CC), corpora allata (CA), antennal lobe (AL) and gnathal ganglion (GNG) (at protein level). Expression in AL detected in all animals and expression in GNG, CA and CC detected in some animals (at protein level).

It localises to the secreted. Its function is as follows. Neuropeptide stimulator of juvenile hormone synthesis. This chain is Allatotropins, found in Agrotis ipsilon (Black cutworm moth).